A 578-amino-acid polypeptide reads, in one-letter code: A-type ATP synthase subunit A (578 aa).

Residue 228–235 (GPFGSGKT) participates in ATP binding.

The protein belongs to the ATPase alpha/beta chains family. Has multiple subunits with at least A(3), B(3), C, D, E, F, H, I and proteolipid K(x).

The protein resides in the cell membrane. It carries out the reaction ATP + H2O + 4 H(+)(in) = ADP + phosphate + 5 H(+)(out). In terms of biological role, component of the A-type ATP synthase that produces ATP from ADP in the presence of a proton gradient across the membrane. The A chain is the catalytic subunit. The chain is A-type ATP synthase subunit A from Methanosarcina acetivorans (strain ATCC 35395 / DSM 2834 / JCM 12185 / C2A).